Here is a 33-residue protein sequence, read N- to C-terminus: Brevinin-2HSb (33 aa).

A disulfide bond links Cys-27 and Cys-33.

In terms of tissue distribution, expressed by the skin glands.

The protein localises to the secreted. Has antibacterial activity against the Gram-positive bacterium S.aureus ATCC 25923 and the Gram-negative bacterium E.coli ATCC 25726. This chain is Brevinin-2HSb, found in Odorrana hosii (Hose's rock frog).